The primary structure comprises 251 residues: Cytochrome c oxidase subunit 2 (251 aa).

A signal peptide spans 1 to 15 (MLNLLYNQIFNVILN). Residues 16–41 (DVPTPYNTYFQDSATPNQEGILELHD) are Mitochondrial intermembrane-facing. A helical membrane pass occupies residues 42-62 (NIMFYLLVILGLVSWLLFTIT). At 63–82 (RTYSKNPIAYKYIKHGQTIE) the chain is on the mitochondrial matrix side. A helical transmembrane segment spans residues 83-103 (IIWTIFPAVILLIIAFPSFIL). Residues 104-251 (LYLCDEVISP…PAFLEWLNEQ (148 aa)) are Mitochondrial intermembrane-facing. 6 residues coordinate Cu cation: H186, C221, E223, C225, H229, and M232. E223 contributes to the Mg(2+) binding site.

This sequence belongs to the cytochrome c oxidase subunit 2 family. Component of the cytochrome c oxidase (complex IV, CIV), a multisubunit enzyme composed of a catalytic core of 3 subunits and several supernumerary subunits. The complex exists as a monomer or a dimer and forms supercomplexes (SCs) in the inner mitochondrial membrane with ubiquinol-cytochrome c oxidoreductase (cytochrome b-c1 complex, complex III, CIII). Cu cation is required as a cofactor. The signal sequence of COX2 is processed by IMP1.

The protein resides in the mitochondrion inner membrane. It carries out the reaction 4 Fe(II)-[cytochrome c] + O2 + 8 H(+)(in) = 4 Fe(III)-[cytochrome c] + 2 H2O + 4 H(+)(out). Component of the cytochrome c oxidase, the last enzyme in the mitochondrial electron transport chain which drives oxidative phosphorylation. The respiratory chain contains 3 multisubunit complexes succinate dehydrogenase (complex II, CII), ubiquinol-cytochrome c oxidoreductase (cytochrome b-c1 complex, complex III, CIII) and cytochrome c oxidase (complex IV, CIV), that cooperate to transfer electrons derived from NADH and succinate to molecular oxygen, creating an electrochemical gradient over the inner membrane that drives transmembrane transport and the ATP synthase. Cytochrome c oxidase is the component of the respiratory chain that catalyzes the reduction of oxygen to water. Electrons originating from reduced cytochrome c in the intermembrane space (IMS) are transferred via the dinuclear copper A center (CU(A)) of subunit 2 and heme A of subunit 1 to the active site in subunit 1, a binuclear center (BNC) formed by heme A3 and copper B (CU(B)). The BNC reduces molecular oxygen to 2 water molecules using 4 electrons from cytochrome c in the IMS and 4 protons from the mitochondrial matrix. The chain is Cytochrome c oxidase subunit 2 (COX2) from Lachancea thermotolerans (strain ATCC 56472 / CBS 6340 / NRRL Y-8284) (Yeast).